Reading from the N-terminus, the 294-residue chain is NAD kinase (294 aa).

The Proton acceptor role is filled by Asp-73. NAD(+) is bound by residues 73–74 (DG), 147–148 (ND), Arg-175, Asp-177, and 188–193 (TAYALS).

This sequence belongs to the NAD kinase family. A divalent metal cation serves as cofactor.

It localises to the cytoplasm. The catalysed reaction is NAD(+) + ATP = ADP + NADP(+) + H(+). Functionally, involved in the regulation of the intracellular balance of NAD and NADP, and is a key enzyme in the biosynthesis of NADP. Catalyzes specifically the phosphorylation on 2'-hydroxyl of the adenosine moiety of NAD to yield NADP. This chain is NAD kinase, found in Nitrosospira multiformis (strain ATCC 25196 / NCIMB 11849 / C 71).